The primary structure comprises 612 residues: Dihydroxy-acid dehydratase (612 aa).

Asp81 serves as a coordination point for Mg(2+). [2Fe-2S] cluster is bound at residue Cys122. Mg(2+) contacts are provided by Asp123 and Lys124. Lys124 is modified (N6-carboxylysine). Position 195 (Cys195) interacts with [2Fe-2S] cluster. Glu491 provides a ligand contact to Mg(2+). Ser517 acts as the Proton acceptor in catalysis.

Belongs to the IlvD/Edd family. Homodimer. [2Fe-2S] cluster serves as cofactor. The cofactor is Mg(2+).

The catalysed reaction is (2R)-2,3-dihydroxy-3-methylbutanoate = 3-methyl-2-oxobutanoate + H2O. It catalyses the reaction (2R,3R)-2,3-dihydroxy-3-methylpentanoate = (S)-3-methyl-2-oxopentanoate + H2O. It functions in the pathway amino-acid biosynthesis; L-isoleucine biosynthesis; L-isoleucine from 2-oxobutanoate: step 3/4. It participates in amino-acid biosynthesis; L-valine biosynthesis; L-valine from pyruvate: step 3/4. Functions in the biosynthesis of branched-chain amino acids. Catalyzes the dehydration of (2R,3R)-2,3-dihydroxy-3-methylpentanoate (2,3-dihydroxy-3-methylvalerate) into 2-oxo-3-methylpentanoate (2-oxo-3-methylvalerate) and of (2R)-2,3-dihydroxy-3-methylbutanoate (2,3-dihydroxyisovalerate) into 2-oxo-3-methylbutanoate (2-oxoisovalerate), the penultimate precursor to L-isoleucine and L-valine, respectively. The polypeptide is Dihydroxy-acid dehydratase (Bartonella tribocorum (strain CIP 105476 / IBS 506)).